We begin with the raw amino-acid sequence, 710 residues long: Pentatricopeptide repeat-containing protein At5g39680 (710 aa).

At S2 the chain carries N-acetylserine. 14 PPR repeats span residues 35–64 (NELL…NQSS), 68–98 (DAYQ…MPER), 99–133 (NVVS…GESR), 135–169 (NEFV…GLIS), 170–200 (HEFV…LPYC), 201–235 (DLSV…DFVW), 236–270 (NNLT…GFNA), 271–301 (EVEA…THAQ), 302–336 (NIFL…EVPP), 337–371 (NEYT…GYRN), 372–402 (HVMV…MTFR), 403–437 (DIVT…GEIP), 438–473 (NRIT…DVQP), and 474–504 (DIQH…APIE). Residues 509-584 (AWRTLLNACY…EPGVSWIGIR (76 aa)) are type E motif. Positions 585–615 (NQTHVFLAEDNQHPEITLIYAKVKEVMSKIK) are type E(+) motif. The tract at residues 616–710 (PLGYSPDVAG…DGQCSCCDYW (95 aa)) is type DYW motif.

The protein belongs to the PPR family. PCMP-H subfamily.

In Arabidopsis thaliana (Mouse-ear cress), this protein is Pentatricopeptide repeat-containing protein At5g39680 (EMB2744).